Consider the following 204-residue polypeptide: Peptide deformylase (204 aa).

2 residues coordinate Fe cation: cysteine 131 and histidine 174. Residue glutamate 175 is part of the active site. Residue histidine 178 participates in Fe cation binding.

The protein belongs to the polypeptide deformylase family. Fe(2+) serves as cofactor.

The catalysed reaction is N-terminal N-formyl-L-methionyl-[peptide] + H2O = N-terminal L-methionyl-[peptide] + formate. Removes the formyl group from the N-terminal Met of newly synthesized proteins. Requires at least a dipeptide for an efficient rate of reaction. N-terminal L-methionine is a prerequisite for activity but the enzyme has broad specificity at other positions. This Streptococcus equi subsp. zooepidemicus (strain H70) protein is Peptide deformylase.